Consider the following 168-residue polypeptide: Probable chemoreceptor glutamine deamidase CheD (168 aa).

Belongs to the CheD family.

It carries out the reaction L-glutaminyl-[protein] + H2O = L-glutamyl-[protein] + NH4(+). Functionally, probably deamidates glutamine residues to glutamate on methyl-accepting chemotaxis receptors (MCPs), playing an important role in chemotaxis. This chain is Probable chemoreceptor glutamine deamidase CheD, found in Pseudomonas syringae pv. tomato (strain ATCC BAA-871 / DC3000).